The chain runs to 421 residues: UDP-N-acetylglucosamine 1-carboxyvinyltransferase (421 aa).

Phosphoenolpyruvate is bound at residue 22–23; sequence KN. Position 93 (arginine 93) interacts with UDP-N-acetyl-alpha-D-glucosamine. Cysteine 117 (proton donor) is an active-site residue. Cysteine 117 is modified (2-(S-cysteinyl)pyruvic acid O-phosphothioketal). Residues 122 to 126, aspartate 308, and valine 330 contribute to the UDP-N-acetyl-alpha-D-glucosamine site; that span reads RPVDL.

It belongs to the EPSP synthase family. MurA subfamily.

The protein localises to the cytoplasm. The catalysed reaction is phosphoenolpyruvate + UDP-N-acetyl-alpha-D-glucosamine = UDP-N-acetyl-3-O-(1-carboxyvinyl)-alpha-D-glucosamine + phosphate. Its pathway is cell wall biogenesis; peptidoglycan biosynthesis. In terms of biological role, cell wall formation. Adds enolpyruvyl to UDP-N-acetylglucosamine. In Pseudomonas aeruginosa (strain LESB58), this protein is UDP-N-acetylglucosamine 1-carboxyvinyltransferase.